Here is a 143-residue protein sequence, read N- to C-terminus: uncharacterized protein (143 aa).

A disordered region spans residues 1–37 (MSAPASSSAIAPSQPTAPGHARHSASWSASASDPSGA).

Belongs to the dynein light chain Tctex-type family.

This is an uncharacterized protein from Mycosarcoma maydis (Corn smut fungus).